Consider the following 310-residue polypeptide: Protoheme IX farnesyltransferase 2 (310 aa).

The next 9 membrane-spanning stretches (helical) occupy residues Pro25 to Gly45, Leu49 to Ile69, Arg87 to Gly107, Ala120 to Leu139, Ser145 to Cys165, Ala176 to Phe196, Leu220 to Gly240, Thr242 to Leu262, and Gln277 to Phe297.

It belongs to the UbiA prenyltransferase family. Protoheme IX farnesyltransferase subfamily.

It localises to the cell inner membrane. It catalyses the reaction heme b + (2E,6E)-farnesyl diphosphate + H2O = Fe(II)-heme o + diphosphate. Its pathway is porphyrin-containing compound metabolism; heme O biosynthesis; heme O from protoheme: step 1/1. Functionally, converts heme B (protoheme IX) to heme O by substitution of the vinyl group on carbon 2 of heme B porphyrin ring with a hydroxyethyl farnesyl side group. The chain is Protoheme IX farnesyltransferase 2 from Shewanella baltica (strain OS185).